The primary structure comprises 104 residues: Nucleoid-associated protein OB0030 (104 aa).

The tract at residues 1 to 23 (MKGNMNNMMKQMQKMQKKMMQAQ) is disordered.

This sequence belongs to the YbaB/EbfC family. As to quaternary structure, homodimer.

It is found in the cytoplasm. Its subcellular location is the nucleoid. Binds to DNA and alters its conformation. May be involved in regulation of gene expression, nucleoid organization and DNA protection. This is Nucleoid-associated protein OB0030 from Oceanobacillus iheyensis (strain DSM 14371 / CIP 107618 / JCM 11309 / KCTC 3954 / HTE831).